The chain runs to 445 residues: Phosphoglucosamine mutase (445 aa).

Ser102 serves as the catalytic Phosphoserine intermediate. Mg(2+)-binding residues include Ser102, Asp241, Asp243, and Asp245. At Ser102 the chain carries Phosphoserine.

It belongs to the phosphohexose mutase family. Mg(2+) serves as cofactor. Activated by phosphorylation.

It catalyses the reaction alpha-D-glucosamine 1-phosphate = D-glucosamine 6-phosphate. Catalyzes the conversion of glucosamine-6-phosphate to glucosamine-1-phosphate. The protein is Phosphoglucosamine mutase of Acinetobacter baumannii (strain ACICU).